The chain runs to 146 residues: MANKMNLAFSALSENESFARVTVSAFIAQLDPTMEELTEIKTIVSEAVTNAIIHGYENDPNGQVYITAELKDRELELIIRDEGVGISDLDEARQPLYTSKPELERSGMGFTIMENFCQELKVISEPMIGTTVYVKKQLTTTKAMCR.

Belongs to the anti-sigma-factor family.

The catalysed reaction is L-seryl-[protein] + ATP = O-phospho-L-seryl-[protein] + ADP + H(+). It carries out the reaction L-threonyl-[protein] + ATP = O-phospho-L-threonyl-[protein] + ADP + H(+). Binds to sigma F and blocks its ability to form an RNA polymerase holoenzyme (E-sigma F). Phosphorylates SpoIIAA on a serine residue. This phosphorylation may enable SpoIIAA to act as an anti-anti-sigma factor that counteracts SpoIIAB and thus releases sigma F from inhibition. The protein is Anti-sigma F factor of Shouchella clausii (strain KSM-K16) (Alkalihalobacillus clausii).